A 341-amino-acid polypeptide reads, in one-letter code: Ketol-acid reductoisomerase (NADP(+)) (341 aa).

One can recognise a KARI N-terminal Rossmann domain in the interval 1 to 181 (MARVYREGDI…GCARAGVLET (181 aa)). Residues 24 to 27 (FGSQ), Ser50, Ser52, and 82 to 85 (DERQ) each bind NADP(+). The active site involves His107. Gly133 is a binding site for NADP(+). The KARI C-terminal knotted domain maps to 182–327 (TFAEETETDL…AELRALAAEG (146 aa)). 4 residues coordinate Mg(2+): Asp190, Glu194, Glu226, and Glu230. Ser251 is a substrate binding site.

It belongs to the ketol-acid reductoisomerase family. The cofactor is Mg(2+).

It catalyses the reaction (2R)-2,3-dihydroxy-3-methylbutanoate + NADP(+) = (2S)-2-acetolactate + NADPH + H(+). It carries out the reaction (2R,3R)-2,3-dihydroxy-3-methylpentanoate + NADP(+) = (S)-2-ethyl-2-hydroxy-3-oxobutanoate + NADPH + H(+). The protein operates within amino-acid biosynthesis; L-isoleucine biosynthesis; L-isoleucine from 2-oxobutanoate: step 2/4. It participates in amino-acid biosynthesis; L-valine biosynthesis; L-valine from pyruvate: step 2/4. Involved in the biosynthesis of branched-chain amino acids (BCAA). Catalyzes an alkyl-migration followed by a ketol-acid reduction of (S)-2-acetolactate (S2AL) to yield (R)-2,3-dihydroxy-isovalerate. In the isomerase reaction, S2AL is rearranged via a Mg-dependent methyl migration to produce 3-hydroxy-3-methyl-2-ketobutyrate (HMKB). In the reductase reaction, this 2-ketoacid undergoes a metal-dependent reduction by NADPH to yield (R)-2,3-dihydroxy-isovalerate. In Rubrobacter xylanophilus (strain DSM 9941 / JCM 11954 / NBRC 16129 / PRD-1), this protein is Ketol-acid reductoisomerase (NADP(+)).